The sequence spans 248 residues: Tropomyosin alpha-4 chain (248 aa).

At A2 the chain carries N-acetylalanine. A coiled-coil region spans residues 2–248 (AGLNSLEAVK…DQTLNELNCI (247 aa)). S6 carries the phosphoserine modification. A disordered region spans residues 15 to 47 (QALQQQADEAEDRAQGLQRELDGERERREKAEG). A compositionally biased stretch (basic and acidic residues) spans 33-47 (RELDGERERREKAEG). Residues K177 and K215 each carry the N6-acetyllysine modification. Residue T216 is modified to Phosphothreonine.

This sequence belongs to the tropomyosin family. In terms of assembly, homodimer. Heterodimer of an alpha (TPM1, TPM3 or TPM4) and a beta (TPM2) chain. As to expression, detected in cardiac tissue and platelets, the form found in cardiac tissue is a higher molecular weight than the form found in platelets. Expressed at higher levels in the platelets of hypertensive patients with cardiac hypertrophy than in the platelets of hypertensive patients without cardiac hypertrophy (at protein level).

The protein localises to the cytoplasm. The protein resides in the cytoskeleton. Its function is as follows. Binds to actin filaments in muscle and non-muscle cells. Plays a central role, in association with the troponin complex, in the calcium dependent regulation of vertebrate striated muscle contraction. Smooth muscle contraction is regulated by interaction with caldesmon. In non-muscle cells is implicated in stabilizing cytoskeleton actin filaments. Binds calcium. Plays a role in platelet biogenesis. The sequence is that of Tropomyosin alpha-4 chain (TPM4) from Homo sapiens (Human).